Reading from the N-terminus, the 143-residue chain is MTIRHDSITAELALRLVVPGGAPVPVAATVRYEPADPYAISIGFRTGADEVVEWTFARQLLSDGVRRPAGDGDVQVWPAAQSGGRIVCLSLSSPSGHALFEMPRSEVLAFLRRTYSAVPLGGESDIIDLDAELALLIWGGPER.

The protein belongs to the SsgA family. In terms of assembly, interacts with SsgA. Interacts with FtsZ (via N-terminus).

It localises to the cell septum. In terms of biological role, involved in sporulation-specific cell division. Required for early stages of sporulation. Important in the process of growth cessation prior to sporulation-specific cell division. Recruits cell division protein FtsZ to the future septum sites and tethers the contractile ring structure (Z ring) to the cytoplasmic membrane during sporulation. Stimulates polymerization and filament length of FtsZ in vitro. This is Sporulation-specific cell division protein SsgB from Frankia casuarinae (strain DSM 45818 / CECT 9043 / HFP020203 / CcI3).